The primary structure comprises 518 residues: Calcium/calmodulin-dependent protein kinase kinase cmkC (518 aa).

The interval 1–72 (MANEGAGSLQ…SEYTLSQDDG (72 aa)) is disordered. Composition is skewed to polar residues over residues 8 to 17 (SLQQDASPGS) and 60 to 71 (NARSEYTLSQDD). Residues 81-376 (YVIKQEIGRG…MDELREHPWV (296 aa)) form the Protein kinase domain. Residues 87-95 (IGRGSFGAV) and Lys109 contribute to the ATP site. Residues 119–149 (RAKSQLLRQSRGPKRSSRWPKLPFSSPGTGT) form a disordered region. Catalysis depends on Asp243, which acts as the Proton acceptor. Residues 404-409 (FSAITK) are autoinhibitory domain. The segment at 407–431 (ITKNFGHVLAVMKAAKKFKSLQGPT) is calmodulin-binding. The tract at residues 453–472 (PTQMDPEESVSLPSPLPYKK) is disordered.

This sequence belongs to the protein kinase superfamily. Ser/Thr protein kinase family.

The enzyme catalyses L-seryl-[protein] + ATP = O-phospho-L-seryl-[protein] + ADP + H(+). It carries out the reaction L-threonyl-[protein] + ATP = O-phospho-L-threonyl-[protein] + ADP + H(+). With respect to regulation, activated by Ca(2+)/calmodulin. Binding of calmodulin may relieve intrasteric autoinhibition. Functionally, calcium/calmodulin-dependent protein kinase that operates in the calcium-triggered CaMKK-CaMK1 signaling cascade. Phosphorylates and activates cmkB in vitro. Required in G1-phase of the cell cycle for proper timing of the initial nuclear division after germination as well as for subsequent nuclear division cycles. Required for the normal temporal regulation of nimX activity. This chain is Calcium/calmodulin-dependent protein kinase kinase cmkC, found in Emericella nidulans (Aspergillus nidulans).